A 415-amino-acid chain; its full sequence is uncharacterized protein (415 aa).

3 disordered regions span residues 39–77, 220–247, and 346–415; these read FLPPSSNTTLQKESQEGSPPPTQSQEPLKPMENVSRPIH, AEDKETTSKGSNAKEESKNGLHPKHPLT, and VTLN…NGSK. 3 stretches are compositionally biased toward basic and acidic residues: residues 220–238, 365–380, and 400–415; these read AEDKETTSKGSNAKEESKN, DVNKDPKLNLCPDKHM, and SKTEKIYPEPRRNGSK.

This is an uncharacterized protein from Rattus norvegicus (Rat).